A 488-amino-acid polypeptide reads, in one-letter code: Malonate-semialdehyde dehydrogenase (488 aa).

NAD(+) is bound by residues Ala150, Phe152, Lys176, Glu179, Arg180, Ser229, and Thr251. Residue Cys284 is the Nucleophile of the active site. Glu382 provides a ligand contact to NAD(+).

This sequence belongs to the aldehyde dehydrogenase family. IolA subfamily. Homotetramer.

The enzyme catalyses 3-oxopropanoate + NAD(+) + CoA + H2O = hydrogencarbonate + acetyl-CoA + NADH + H(+). It carries out the reaction 2-methyl-3-oxopropanoate + NAD(+) + CoA + H2O = propanoyl-CoA + hydrogencarbonate + NADH + H(+). Its pathway is polyol metabolism; myo-inositol degradation into acetyl-CoA; acetyl-CoA from myo-inositol: step 7/7. In terms of biological role, catalyzes the oxidation of malonate semialdehyde (MSA) and methylmalonate semialdehyde (MMSA) into acetyl-CoA and propanoyl-CoA, respectively. Is involved in a myo-inositol catabolic pathway. Bicarbonate, and not CO2, is the end-product of the enzymatic reaction. This Listeria monocytogenes serovar 1/2a (strain ATCC BAA-679 / EGD-e) protein is Malonate-semialdehyde dehydrogenase.